A 161-amino-acid polypeptide reads, in one-letter code: Putative 4-hydroxy-4-methyl-2-oxoglutarate aldolase (161 aa).

Substrate is bound by residues 77 to 80 and arginine 99; that span reads GGNL. Aspartate 100 serves as a coordination point for a divalent metal cation.

The protein belongs to the class II aldolase/RraA-like family. Homotrimer. A divalent metal cation serves as cofactor.

The enzyme catalyses 4-hydroxy-4-methyl-2-oxoglutarate = 2 pyruvate. The catalysed reaction is oxaloacetate + H(+) = pyruvate + CO2. Its function is as follows. Catalyzes the aldol cleavage of 4-hydroxy-4-methyl-2-oxoglutarate (HMG) into 2 molecules of pyruvate. Also contains a secondary oxaloacetate (OAA) decarboxylase activity due to the common pyruvate enolate transition state formed following C-C bond cleavage in the retro-aldol and decarboxylation reactions. The sequence is that of Putative 4-hydroxy-4-methyl-2-oxoglutarate aldolase from Methylococcus capsulatus (strain ATCC 33009 / NCIMB 11132 / Bath).